Here is an 85-residue protein sequence, read N- to C-terminus: Small ribosomal subunit protein bS16 (85 aa).

This sequence belongs to the bacterial ribosomal protein bS16 family.

This chain is Small ribosomal subunit protein bS16, found in Acinetobacter baylyi (strain ATCC 33305 / BD413 / ADP1).